A 488-amino-acid chain; its full sequence is Probable malate:quinone oxidoreductase (488 aa).

This sequence belongs to the MQO family. Requires FAD as cofactor.

The enzyme catalyses (S)-malate + a quinone = a quinol + oxaloacetate. Its pathway is carbohydrate metabolism; tricarboxylic acid cycle; oxaloacetate from (S)-malate (quinone route): step 1/1. This chain is Probable malate:quinone oxidoreductase, found in Neisseria meningitidis serogroup C / serotype 2a (strain ATCC 700532 / DSM 15464 / FAM18).